The chain runs to 310 residues: Vomeronasal type-1 receptor 40 (310 aa).

Residues 1-20 (MNKANMLRTDKDMQIILFSE) lie on the Extracellular side of the membrane. The helical transmembrane segment at 21–41 (VSVGISANSILFIAHVCMILG) threads the bilayer. The Cytoplasmic portion of the chain corresponds to 42 to 50 (ENRPKPIDL). Residues 51–71 (YIAFLSLTQLMLLITMGLIAV) form a helical membrane-spanning segment. Topologically, residues 72-93 (DMFLSQGIWDSTTCQSLIYLHR) are extracellular. A disulfide bond links Cys-85 and Cys-172. The chain crosses the membrane as a helical span at residues 94 to 114 (LLRGLSLCATCLLNILWTITL). The Cytoplasmic segment spans residues 115–134 (SSRSFCSTKFKHKSPHHISG). A helical membrane pass occupies residues 135–155 (AFIFFCVLYMSFSSHLFISII). Residues 156–190 (ATHNLTSENFIYVTQSCSLLPLSYSRTSMFSAPMA) lie on the Extracellular side of the membrane. N-linked (GlcNAc...) asparagine glycosylation occurs at Asn-159. The chain crosses the membrane as a helical span at residues 191 to 211 (IREAFLVSLMALSSGYMVALL). Topologically, residues 212 to 238 (WRHKKQAQHLHSTSLSSKASPEQRATR) are cytoplasmic. Residues 239–259 (TILLLMSFFVVLYILENAVFY) form a helical membrane-spanning segment. Topologically, residues 260-268 (SRIKFKDGS) are extracellular. The chain crosses the membrane as a helical span at residues 269 to 289 (ILYCVQIILCHSYATVNPFVF). The Cytoplasmic segment spans residues 290–310 (ICTEKHIIKFWESKCGRIVNI).

Belongs to the G-protein coupled receptor 1 family.

It localises to the cell membrane. In terms of biological role, putative pheromone receptor implicated in the regulation of social and reproductive behavior. The protein is Vomeronasal type-1 receptor 40 (Vmn1r40) of Mus musculus (Mouse).